The primary structure comprises 860 residues: Leucine--tRNA ligase (860 aa).

The short motif at 42–52 is the 'HIGH' region element; it reads PYPSGRLHMGH. Positions 619-623 match the 'KMSKS' region motif; it reads KMSKS. Lys-622 lines the ATP pocket.

It belongs to the class-I aminoacyl-tRNA synthetase family.

The protein localises to the cytoplasm. It carries out the reaction tRNA(Leu) + L-leucine + ATP = L-leucyl-tRNA(Leu) + AMP + diphosphate. In Pasteurella multocida (strain Pm70), this protein is Leucine--tRNA ligase.